A 135-amino-acid polypeptide reads, in one-letter code: Large ribosomal subunit protein uL16c (135 aa).

This sequence belongs to the universal ribosomal protein uL16 family. Part of the 50S ribosomal subunit.

Its subcellular location is the plastid. The protein localises to the chloroplast. The protein is Large ribosomal subunit protein uL16c of Daucus carota (Wild carrot).